The sequence spans 164 residues: Transcription elongation factor GreA (164 aa).

The stretch at 12-38 (RRLERELERLKKERPGVILAIKEAREE) forms a coiled coil.

This sequence belongs to the GreA/GreB family.

Necessary for efficient RNA polymerase transcription elongation past template-encoded arresting sites. The arresting sites in DNA have the property of trapping a certain fraction of elongating RNA polymerases that pass through, resulting in locked ternary complexes. Cleavage of the nascent transcript by cleavage factors such as GreA or GreB allows the resumption of elongation from the new 3'terminus. GreA releases sequences of 2 to 3 nucleotides. In Solidesulfovibrio magneticus (strain ATCC 700980 / DSM 13731 / RS-1) (Desulfovibrio magneticus), this protein is Transcription elongation factor GreA.